A 102-amino-acid polypeptide reads, in one-letter code: Small ribosomal subunit protein bS18 (102 aa).

This sequence belongs to the bacterial ribosomal protein bS18 family. As to quaternary structure, part of the 30S ribosomal subunit. Forms a tight heterodimer with protein bS6.

Binds as a heterodimer with protein bS6 to the central domain of the 16S rRNA, where it helps stabilize the platform of the 30S subunit. The sequence is that of Small ribosomal subunit protein bS18 from Orientia tsutsugamushi (strain Boryong) (Rickettsia tsutsugamushi).